The following is a 901-amino-acid chain: Translation initiation factor IF-2 (901 aa).

Residues 48–313 (HLNREHGGSS…SSLQQGFTKP (266 aa)) are disordered. Over residues 68–82 (STLSVPGTGGKSKSV) the composition is skewed to polar residues. Residues 106–226 (ALAKREAEEQ…RMAEANEGKW (121 aa)) are compositionally biased toward basic and acidic residues. Positions 263-277 (ARGRGGKAAKQKKGS) are enriched in basic residues. The segment covering 278 to 291 (KLSESKADREEARA) has biased composition (basic and acidic residues). Positions 400-569 (PRAPVVTIMG…LLQAEVLELK (170 aa)) constitute a tr-type G domain. The G1 stretch occupies residues 409 to 416 (GHVDHGKT). 409 to 416 (GHVDHGKT) is a GTP binding site. The tract at residues 434–438 (GITQH) is G2. The G3 stretch occupies residues 455-458 (DTPG). GTP-binding positions include 455 to 459 (DTPGH) and 509 to 512 (NKID). Residues 509 to 512 (NKID) are G4. The interval 545–547 (SAK) is G5.

The protein belongs to the TRAFAC class translation factor GTPase superfamily. Classic translation factor GTPase family. IF-2 subfamily.

Its subcellular location is the cytoplasm. In terms of biological role, one of the essential components for the initiation of protein synthesis. Protects formylmethionyl-tRNA from spontaneous hydrolysis and promotes its binding to the 30S ribosomal subunits. Also involved in the hydrolysis of GTP during the formation of the 70S ribosomal complex. The protein is Translation initiation factor IF-2 of Edwardsiella ictaluri (strain 93-146).